The chain runs to 375 residues: Aminomethyltransferase (375 aa).

Belongs to the GcvT family. The glycine cleavage system is composed of four proteins: P, T, L and H.

It catalyses the reaction N(6)-[(R)-S(8)-aminomethyldihydrolipoyl]-L-lysyl-[protein] + (6S)-5,6,7,8-tetrahydrofolate = N(6)-[(R)-dihydrolipoyl]-L-lysyl-[protein] + (6R)-5,10-methylene-5,6,7,8-tetrahydrofolate + NH4(+). Its function is as follows. The glycine cleavage system catalyzes the degradation of glycine. This Ralstonia nicotianae (strain ATCC BAA-1114 / GMI1000) (Ralstonia solanacearum) protein is Aminomethyltransferase.